The primary structure comprises 163 residues: Transcription elongation factor GreB (163 aa).

It belongs to the GreA/GreB family. GreB subfamily.

In terms of biological role, necessary for efficient RNA polymerase transcription elongation past template-encoded arresting sites. The arresting sites in DNA have the property of trapping a certain fraction of elongating RNA polymerases that pass through, resulting in locked ternary complexes. Cleavage of the nascent transcript by cleavage factors such as GreA or GreB allows the resumption of elongation from the new 3'terminus. GreB releases sequences of up to 9 nucleotides in length. This is Transcription elongation factor GreB from Vibrio parahaemolyticus serotype O3:K6 (strain RIMD 2210633).